Here is a 320-residue protein sequence, read N- to C-terminus: Ferrochelatase (320 aa).

Fe cation-binding residues include H194 and E275.

The protein belongs to the ferrochelatase family. Monomer.

The protein localises to the cytoplasm. It carries out the reaction heme b + 2 H(+) = protoporphyrin IX + Fe(2+). It functions in the pathway porphyrin-containing compound metabolism; protoheme biosynthesis; protoheme from protoporphyrin-IX: step 1/1. Catalyzes the ferrous insertion into protoporphyrin IX. This Escherichia coli (strain K12 / MC4100 / BW2952) protein is Ferrochelatase.